Here is a 491-residue protein sequence, read N- to C-terminus: Probable cytosol aminopeptidase (491 aa).

Lys-261 and Asp-266 together coordinate Mn(2+). Lys-273 is a catalytic residue. Mn(2+)-binding residues include Asp-284, Asp-343, and Glu-345. Arg-347 is a catalytic residue.

Belongs to the peptidase M17 family. Requires Mn(2+) as cofactor.

It is found in the cytoplasm. It catalyses the reaction Release of an N-terminal amino acid, Xaa-|-Yaa-, in which Xaa is preferably Leu, but may be other amino acids including Pro although not Arg or Lys, and Yaa may be Pro. Amino acid amides and methyl esters are also readily hydrolyzed, but rates on arylamides are exceedingly low.. The catalysed reaction is Release of an N-terminal amino acid, preferentially leucine, but not glutamic or aspartic acids.. Functionally, presumably involved in the processing and regular turnover of intracellular proteins. Catalyzes the removal of unsubstituted N-terminal amino acids from various peptides. The polypeptide is Probable cytosol aminopeptidase (Geobacter sp. (strain M21)).